The sequence spans 514 residues: Adenylosuccinate synthetase 1, chloroplastic (514 aa).

Residues 1–73 (MAMAAAAAVA…AQAIERESVK (73 aa)) constitute a chloroplast transit peptide. GTP contacts are provided by residues 100-106 (GDEGKGK) and 128-130 (GHT). Aspartate 101 functions as the Proton acceptor in the catalytic mechanism. Mg(2+) contacts are provided by aspartate 101 and glycine 128. Residues 101–104 (DEGK), 126–129 (NAGH), threonine 218, arginine 232, glutamine 312, threonine 327, and arginine 391 contribute to the IMP site. Histidine 129 serves as the catalytic Proton donor. A substrate-binding site is contributed by 387-393 (TTTGRPR). GTP is bound by residues arginine 393, 419–421 (KLD), and 502–504 (GVG).

The protein belongs to the adenylosuccinate synthetase family. As to quaternary structure, homodimer. Mg(2+) is required as a cofactor.

It localises to the plastid. The protein localises to the chloroplast. The catalysed reaction is IMP + L-aspartate + GTP = N(6)-(1,2-dicarboxyethyl)-AMP + GDP + phosphate + 2 H(+). It functions in the pathway purine metabolism; AMP biosynthesis via de novo pathway; AMP from IMP: step 1/2. Its function is as follows. Plays an important role in the de novo pathway and in the salvage pathway of purine nucleotide biosynthesis. Catalyzes the first committed step in the biosynthesis of AMP from IMP. In Physcomitrium patens (Spreading-leaved earth moss), this protein is Adenylosuccinate synthetase 1, chloroplastic.